A 1141-amino-acid chain; its full sequence is Eukaryotic translation initiation factor 3 subunit A (1141 aa).

The 183-residue stretch at 319-501 (LQRMAAHVLL…NSIYFGTDLT (183 aa)) folds into the PCI domain. Basic and acidic residues-rich tracts occupy residues 588 to 623 (QNNA…EERE) and 829 to 899 (AAEE…RGGD). 2 disordered regions span residues 588-631 (QNNA…QNEI) and 829-1141 (AAEE…VKRR). At Ser908 the chain carries Phosphoserine. Composition is skewed to basic and acidic residues over residues 920-976 (ERND…EPDT), 990-1051 (SRDD…EPQR), 1059-1087 (DAPR…RGDQ), and 1110-1131 (TREE…KAGD).

It belongs to the eIF-3 subunit A family. As to quaternary structure, component of the eukaryotic translation initiation factor 3 (eIF-3) complex. The eIF-3 complex interacts with pix.

The protein localises to the cytoplasm. Its function is as follows. RNA-binding component of the eukaryotic translation initiation factor 3 (eIF-3) complex, which is involved in protein synthesis of a specialized repertoire of mRNAs and, together with other initiation factors, stimulates binding of mRNA and methionyl-tRNAi to the 40S ribosome. The eIF-3 complex specifically targets and initiates translation of a subset of mRNAs involved in cell proliferation. This is Eukaryotic translation initiation factor 3 subunit A from Drosophila sechellia (Fruit fly).